The primary structure comprises 129 residues: MDLDVKEIIKNMNLKFRNIEGKKLLLAISTDKYGNVLMTAFMSEESLKKSIETGFMHYYSTSRDKLWRKGEESGNIQKIINVFRDCDGDALLFTVEQTGWACHEGYMSCFHNKIDLNTGKSTVVGNKLD.

A Mg(2+)-binding site is contributed by D85. C86 serves as a coordination point for Zn(2+). Positions 87 and 89 each coordinate Mg(2+). The Zn(2+) site is built by C102 and C109.

Belongs to the PRA-CH family. In terms of assembly, homodimer. Mg(2+) serves as cofactor. Requires Zn(2+) as cofactor.

The protein resides in the cytoplasm. It carries out the reaction 1-(5-phospho-beta-D-ribosyl)-5'-AMP + H2O = 1-(5-phospho-beta-D-ribosyl)-5-[(5-phospho-beta-D-ribosylamino)methylideneamino]imidazole-4-carboxamide. The protein operates within amino-acid biosynthesis; L-histidine biosynthesis; L-histidine from 5-phospho-alpha-D-ribose 1-diphosphate: step 3/9. Its function is as follows. Catalyzes the hydrolysis of the adenine ring of phosphoribosyl-AMP. The polypeptide is Phosphoribosyl-AMP cyclohydrolase (Methanococcus maripaludis (strain C6 / ATCC BAA-1332)).